The primary structure comprises 60 residues: Large ribosomal subunit protein bL32 (60 aa).

The segment covering 1 to 23 has biased composition (basic residues); that stretch reads MAKHPVPKKKTSKARRDARRSHH. The interval 1–30 is disordered; that stretch reads MAKHPVPKKKTSKARRDARRSHHALTPPTL.

In terms of assembly, part of the 50S ribosomal subunit.

Its function is as follows. Found on the solvent side of the large subunit. In Thermus thermophilus (strain ATCC 27634 / DSM 579 / HB8), this protein is Large ribosomal subunit protein bL32 (rpmF).